The primary structure comprises 208 residues: ATP-dependent dethiobiotin synthetase BioD (208 aa).

11–16 (EVGKTF) is a binding site for ATP. Residue Thr15 participates in Mg(2+) binding. The active site involves Lys31. Residue Ser35 coordinates substrate. ATP contacts are provided by residues Asp42, 95–98 (ETSG), and 155–156 (NQ). The Mg(2+) site is built by Asp42 and Glu95.

The protein belongs to the dethiobiotin synthetase family. In terms of assembly, homodimer. Mg(2+) is required as a cofactor.

The protein resides in the cytoplasm. The enzyme catalyses (7R,8S)-7,8-diammoniononanoate + CO2 + ATP = (4R,5S)-dethiobiotin + ADP + phosphate + 3 H(+). It participates in cofactor biosynthesis; biotin biosynthesis; biotin from 7,8-diaminononanoate: step 1/2. In terms of biological role, catalyzes a mechanistically unusual reaction, the ATP-dependent insertion of CO2 between the N7 and N8 nitrogen atoms of 7,8-diaminopelargonic acid (DAPA, also called 7,8-diammoniononanoate) to form a ureido ring. This is ATP-dependent dethiobiotin synthetase BioD from Chlamydia felis (strain Fe/C-56) (Chlamydophila felis).